Here is a 607-residue protein sequence, read N- to C-terminus: UvrABC system protein C (607 aa).

Positions 16 to 94 (GRPGVYRMFD…IKEWRPPYNI (79 aa)) constitute a GIY-YIG domain. One can recognise a UVR domain in the interval 203-238 (NALTDELSGAMEQAASTLDFERAAELRDQISLLRRV).

The protein belongs to the UvrC family. Interacts with UvrB in an incision complex.

It is found in the cytoplasm. Its function is as follows. The UvrABC repair system catalyzes the recognition and processing of DNA lesions. UvrC both incises the 5' and 3' sides of the lesion. The N-terminal half is responsible for the 3' incision and the C-terminal half is responsible for the 5' incision. The sequence is that of UvrABC system protein C from Pseudomonas fluorescens (strain SBW25).